A 229-amino-acid chain; its full sequence is Vacuolar protein sorting-associated protein 24 homolog 1 (229 aa).

A coiled-coil region spans residues 15-60 (KQLLRDWQRKLRQECRNIERQIRDIQKEERNVQKAIKEAAKRNDMV). The tract at residues 193 to 215 (VPAQKASTSREEEAVAEGVDDEE) is disordered. Residues 206 to 215 (AVAEGVDDEE) show a composition bias toward acidic residues.

This sequence belongs to the SNF7 family. In terms of assembly, component of the endosomal sorting required for transport complex III (ESCRT-III), composed at least of VPS2, VPS20, VPS24 and VPS32. Interacts with SKD1.

It is found in the endosome. Functionally, component of the ESCRT-III complex, which is required for multivesicular bodies (MVBs) formation and sorting of endosomal cargo proteins into MVBs. The ESCRT-III complex is probably involved in the concentration of MVB cargo. In Arabidopsis thaliana (Mouse-ear cress), this protein is Vacuolar protein sorting-associated protein 24 homolog 1 (VPS24-1).